The primary structure comprises 729 residues: Catalase-peroxidase (729 aa).

A disordered region spans residues 1 to 24 (MDAKTNDGKAGQCPFTSGRGHKNR). The segment at residues 95–217 (WHSAGTYRIT…LAAVQMGLIY (123 aa)) is a cross-link (tryptophyl-tyrosyl-methioninium (Trp-Tyr) (with M-243)). Residue His-96 is the Proton acceptor of the active site. The segment at residues 217–243 (YVNPEGPNGQPDPLAAAKDIRETFLRM) is a cross-link (tryptophyl-tyrosyl-methioninium (Tyr-Met) (with W-95)). Heme b is bound at residue His-258.

Belongs to the peroxidase family. Peroxidase/catalase subfamily. In terms of assembly, homodimer or homotetramer. Heme b is required as a cofactor. Formation of the three residue Trp-Tyr-Met cross-link is important for the catalase, but not the peroxidase activity of the enzyme.

The catalysed reaction is H2O2 + AH2 = A + 2 H2O. The enzyme catalyses 2 H2O2 = O2 + 2 H2O. Its function is as follows. Bifunctional enzyme with both catalase and broad-spectrum peroxidase activity. The protein is Catalase-peroxidase of Nitrobacter winogradskyi (strain ATCC 25391 / DSM 10237 / CIP 104748 / NCIMB 11846 / Nb-255).